The primary structure comprises 142 residues: Large ribosomal subunit protein uL13 (142 aa).

The protein belongs to the universal ribosomal protein uL13 family. In terms of assembly, part of the 50S ribosomal subunit.

This protein is one of the early assembly proteins of the 50S ribosomal subunit, although it is not seen to bind rRNA by itself. It is important during the early stages of 50S assembly. The polypeptide is Large ribosomal subunit protein uL13 (Alkaliphilus metalliredigens (strain QYMF)).